A 252-amino-acid polypeptide reads, in one-letter code: Mediator of RNA polymerase II transcription subunit 8 (252 aa).

Positions 6-30 form a coiled coil; it reads QDQIKTLEQSRQRLVQLTRSLASLI. The disordered stretch occupies residues 170–252; it reads RQLEDEDEEE…MTTGIPPTQR (83 aa). Positions 173–196 are enriched in acidic residues; that stretch reads EDEDEEESESESEEEGEGEEEEME.

It belongs to the Mediator complex subunit 8 family. Component of the Mediator complex.

The protein resides in the nucleus. In terms of biological role, component of the Mediator complex, a coactivator involved in the regulated transcription of nearly all RNA polymerase II-dependent genes. Mediator functions as a bridge to convey information from gene-specific regulatory proteins to the basal RNA polymerase II transcription machinery. Mediator is recruited to promoters by direct interactions with regulatory proteins and serves as a scaffold for the assembly of a functional preinitiation complex with RNA polymerase II and the general transcription factors. In Neosartorya fischeri (strain ATCC 1020 / DSM 3700 / CBS 544.65 / FGSC A1164 / JCM 1740 / NRRL 181 / WB 181) (Aspergillus fischerianus), this protein is Mediator of RNA polymerase II transcription subunit 8 (med8).